Here is a 245-residue protein sequence, read N- to C-terminus: Derlin-1 (245 aa).

At 1–5 the chain is on the cytoplasmic side; sequence MDLEN. The helical transmembrane segment at 6–26 threads the bilayer; it reads FLLGIPIVTRYWFLASTIIPL. At 27 to 57 the chain is on the lumenal side; that stretch reads LGRFGFINVQWMFLQWDLVVNKFQFWRPLTA. Residues 58-78 traverse the membrane as a helical segment; the sequence is LIYYPVTPQTGFHWLMMCYFL. At 79 to 100 the chain is on the cytoplasmic side; sequence YNYSKALESETYRGRSADYLFM. The chain crosses the membrane as a helical span at residues 101-121; the sequence is LIFNWFFCSGLCMALDIYFLL. The Lumenal portion of the chain corresponds to 122–166; sequence EPMVISVLYVWCQVNKDTIVSFWFGMRFPARYLPWVLWGFNAVLR. The helical transmembrane segment at 167–187 threads the bilayer; it reads GGGTNELVGILVGHAYFFVAL. Residues 188-245 lie on the Cytoplasmic side of the membrane; the sequence is KYPDEYGVDLISTPEFLHRLIPDEDGGIHGQDGNIRGARQQPRGHQWPGGVGARLGGN. A disordered region spans residues 218-245; the sequence is QDGNIRGARQQPRGHQWPGGVGARLGGN. Residues 234–245 are compositionally biased toward gly residues; sequence WPGGVGARLGGN.

Belongs to the derlin family.

The protein localises to the endoplasmic reticulum membrane. Specifically required for the degradation process of misfolded endoplasmic reticulum (ER) luminal proteins. Participates in the transfer of misfolded proteins from the ER to the cytosol, where they are destroyed by the proteasome in a ubiquitin-dependent manner. In Caenorhabditis elegans, this protein is Derlin-1.